We begin with the raw amino-acid sequence, 280 residues long: Dual adapter for phosphotyrosine and 3-phosphotyrosine and 3-phosphoinositide (280 aa).

The segment at 1 to 20 is disordered; sequence MGRAELLEGKMSTQDPSDLW. Residues 35 to 129 form the SH2 domain; sequence WYHGNLTRHA…GTLMVLKHPY (95 aa). Residue Tyr139 is modified to Phosphotyrosine. Ser141 is subject to Phosphoserine. One can recognise a PH domain in the interval 164–259; that stretch reads LGTKEGYLTK…WIKILRWKLS (96 aa).

Interacts with PtdIns(3,4,5)P3 and PLCG2. In vitro, interacts with PtdIns(3,4)P2. Phosphorylated on tyrosine residues. Highly expressed in placenta and lung, followed by brain, heart, kidney, liver, pancreas and skeletal muscle. Expressed by B-lymphocytes, but not T-lymphocytes or nonhematopoietic cells.

The protein resides in the cytoplasm. The protein localises to the membrane. In terms of biological role, may act as a B-cell-associated adapter that regulates B-cell antigen receptor (BCR)-signaling downstream of PI3K. This is Dual adapter for phosphotyrosine and 3-phosphotyrosine and 3-phosphoinositide (DAPP1) from Homo sapiens (Human).